The sequence spans 811 residues: TLR4 interactor with leucine rich repeats (811 aa).

A signal peptide spans 1–25 (MEAARALRLLLVVCGCLALPPLAEP). Residues 26 to 57 (VCPERCDCQHPQHLLCTNRGLRVVPKTSSLPS) form the LRRNT domain. Residues 26 to 696 (VCPERCDCQH…AGSRGGVDYQ (671 aa)) lie on the Extracellular side of the membrane. LRR repeat units follow at residues 61–81 (VLTYSLGGNFITNITAFDFHR), 84–105 (QLRRLDLQYNQIRSLHPKTFEK), 108–129 (RLEELYLGNNLLQALAPGTLAP), 132–153 (KLRILYANGNEISRLSRGSFEG), 156–177 (SLVKLRLDGNALGALPDAVFAP), 180–201 (NLLYLHLESNRIRFLGKNAFAQ), 204–223 (KLRFLNLSANELQPSLRHAA), 230–251 (SLSSLILSANNLQHLGPRIFQH), 254–275 (RLGLLSLRGNQLTHLAPEAFWG), 278–299 (ALRELRLEGNRLSQLPTALLEP), 302–323 (SLEALDLSGNELSALHPATFGH), and 326–347 (RLRELSLRNNALSALSGDIFAA). Asn-73 carries an N-linked (GlcNAc...) asparagine glycan. A glycan (N-linked (GlcNAc...) asparagine) is linked at Asn-209. Residues 359–416 (NGWTCDCRLRGLKRWMGDWHSQGRLLTVFVQCRHPPALRGKYLDYLDDQQLQNGSCAD) form the LRRCT domain. The disordered stretch occupies residues 484–549 (LSRRGPGLQQ…PSPAGDPWQR (66 aa)). Low complexity-rich tracts occupy residues 492-508 (QQPSPSVAAAAGPAPQS) and 530-544 (PTPTASPGSAPSPAG). Asn-589 carries N-linked (GlcNAc...) asparagine glycosylation. The helical transmembrane segment at 697 to 717 (LLTLALLTVNALLVLLALAAW) threads the bilayer. At 718–811 (ASRWLRRKLR…EDRLLQRFAD (94 aa)) the chain is on the cytoplasmic side. A Phosphoserine modification is found at Ser-798.

In terms of assembly, belongs to the lipopolysaccharide (LPS) receptor, a multi-protein complex containing at least CD14, MD-2 and TLR4. Interacts with TLR4; this interaction is greatly enhanced by LPS stimulation. Interacts with LPS. In terms of processing, N-glycolysaled. Highly expressed in the brain, ovary, small intestine and spleen.

It localises to the membrane. Functionally, component of the TLR4 signaling complex. Mediates the innate immune response to bacterial lipopolysaccharide (LPS) leading to cytokine secretion. The protein is TLR4 interactor with leucine rich repeats (TRIL) of Homo sapiens (Human).